Consider the following 297-residue polypeptide: 4-diphosphocytidyl-2-C-methyl-D-erythritol kinase (297 aa).

Lysine 22 is a catalytic residue. Position 111 to 121 (proline 111 to serine 121) interacts with ATP. The active site involves aspartate 153.

Belongs to the GHMP kinase family. IspE subfamily.

It catalyses the reaction 4-CDP-2-C-methyl-D-erythritol + ATP = 4-CDP-2-C-methyl-D-erythritol 2-phosphate + ADP + H(+). It participates in isoprenoid biosynthesis; isopentenyl diphosphate biosynthesis via DXP pathway; isopentenyl diphosphate from 1-deoxy-D-xylulose 5-phosphate: step 3/6. In terms of biological role, catalyzes the phosphorylation of the position 2 hydroxy group of 4-diphosphocytidyl-2C-methyl-D-erythritol. This is 4-diphosphocytidyl-2-C-methyl-D-erythritol kinase from Polaromonas naphthalenivorans (strain CJ2).